A 288-amino-acid chain; its full sequence is Phosphopantetheinyl transferase (288 aa).

Residues Arg60, 99 to 104, and 118 to 121 contribute to the CoA site; these read RTEMGK and NLSH. Positions 139 and 196 each coordinate Mg(2+). 196–200 serves as a coordination point for CoA; that stretch reads EAYLK.

It belongs to the P-Pant transferase superfamily. AcpS family. As to quaternary structure, monomer.

The protein resides in the cytoplasm. It is found in the cytosol. It catalyses the reaction apo-[ACP] + CoA = holo-[ACP] + adenosine 3',5'-bisphosphate + H(+). Its pathway is lipid metabolism; fatty acid biosynthesis. Phosphopantetheinyl transferase that is essential for attaching phosphopantetheine to ACP domains of the polyunsaturated fatty acid (PUFA) synthase converting the inactive apo-synthase to the active holo-synthase. The protein is Phosphopantetheinyl transferase of Thraustochytrium sp. (strain ATCC 26185 / S-3).